The primary structure comprises 444 residues: Phosphoglucosamine mutase (444 aa).

Catalysis depends on serine 104, which acts as the Phosphoserine intermediate. Positions 104, 243, 245, and 247 each coordinate Mg(2+). Serine 104 is modified (phosphoserine).

Belongs to the phosphohexose mutase family. Mg(2+) is required as a cofactor. Post-translationally, activated by phosphorylation.

The enzyme catalyses alpha-D-glucosamine 1-phosphate = D-glucosamine 6-phosphate. Its function is as follows. Catalyzes the conversion of glucosamine-6-phosphate to glucosamine-1-phosphate. The protein is Phosphoglucosamine mutase of Neisseria meningitidis serogroup A / serotype 4A (strain DSM 15465 / Z2491).